A 361-amino-acid polypeptide reads, in one-letter code: Trehalose 6-phosphate phosphatase RA3 (361 aa).

The protein belongs to the trehalose phosphatase family. A divalent metal cation serves as cofactor. Expressed in axillary inflorescence meristems.

The enzyme catalyses alpha,alpha-trehalose 6-phosphate + H2O = alpha,alpha-trehalose + phosphate. The protein operates within glycan biosynthesis; trehalose biosynthesis. Functionally, removes the phosphate from trehalose 6-phosphate to produce free trehalose. Is specific for trehalose 6-phosphate. Does not possess activity toward glucose, sucrose or fructose 6-phosphates. Regulates inflorescence branching. Required to establish the correct identity and determinacy of axillary meristems in both male and female inflorescences. May act through a sugar signal that moves into axillary meristems. Acts upstream of RA1. May have a transcriptional regulatory function. This chain is Trehalose 6-phosphate phosphatase RA3, found in Zea mays (Maize).